We begin with the raw amino-acid sequence, 1421 residues long: ALK tyrosine kinase receptor homolog scd-2 (1421 aa).

The signal sequence occupies residues 1-20 (MRKRRLWWFVVLFRVTLVGA). Residues 21-903 (ILPNETFDVR…DTCEEIQIWT (883 aa)) lie on the Extracellular side of the membrane. N-linked (GlcNAc...) asparagine glycosylation is found at Asn24, Asn44, Asn70, Asn83, Asn119, and Asn201. The LDL-receptor class A domain maps to 300-338 (QCSRGDQFLCSISANTRCLQNAQCDSRIDCDDESDEMDC). Intrachain disulfides connect Cys301–Cys317, Cys309–Cys329, and Cys323–Cys338. Positions 339–542 (GNINGTMCDF…NLSFSPTCFE (204 aa)) constitute an MAM domain. N-linked (GlcNAc...) asparagine glycans are attached at residues Asn342, Asn362, Asn495, Asn533, Asn546, Asn633, Asn726, Asn793, Asn849, Asn873, and Asn893. Residues 904–924 (LYNITFLIFAALTIIGALFVV) form a helical membrane-spanning segment. The Cytoplasmic segment spans residues 925–1421 (YHYRNREKQM…SVPLLECQTR (497 aa)). Residues 976–1261 (IERGRVLGRG…GMPFPIHPAV (286 aa)) form the Protein kinase domain. ATP-binding positions include 982–990 (LGRGNFGEV) and Lys1003. The active-site Proton acceptor is the Asp1106.

It belongs to the protein kinase superfamily. Tyr protein kinase family. Insulin receptor subfamily. In terms of assembly, interacts (via cytoplasmic domain) with fsn-1 (via SPRY domain). Expressed in AIA sensory neurons.

The protein localises to the cell membrane. The catalysed reaction is L-tyrosyl-[protein] + ATP = O-phospho-L-tyrosyl-[protein] + ADP + H(+). Functionally, probable tyrosine-protein kinase receptor which regulates the dauer/non-dauer developmental decision probably by controlling daf-3 transcriptional activity in parallel or together with the TGF-beta pathway. Regulates integration of conflicting sensory cues in AIA interneurons. May act as a receptor for hen-1. In AWA neurons, together with hen-1, plays a role in regulating olfactory adaptation by controlling the forgetting sensory responses to odorants such as diacetyl. This is ALK tyrosine kinase receptor homolog scd-2 from Caenorhabditis elegans.